The following is a 528-amino-acid chain: Phosphoenolpyruvate carboxykinase (ATP) (528 aa).

Substrate contacts are provided by Arg56, Tyr192, and Lys198. ATP contacts are provided by residues Lys198, His217, and 233 to 241 (GLSGTGKTT). Mn(2+) contacts are provided by Lys198 and His217. Position 254 (Asp254) interacts with Mn(2+). ATP contacts are provided by Glu282, Arg319, and Thr444. Arg319 contacts substrate.

Belongs to the phosphoenolpyruvate carboxykinase (ATP) family. The cofactor is Mn(2+).

Its subcellular location is the cytoplasm. The catalysed reaction is oxaloacetate + ATP = phosphoenolpyruvate + ADP + CO2. The protein operates within carbohydrate biosynthesis; gluconeogenesis. Involved in the gluconeogenesis. Catalyzes the conversion of oxaloacetate (OAA) to phosphoenolpyruvate (PEP) through direct phosphoryl transfer between the nucleoside triphosphate and OAA. The protein is Phosphoenolpyruvate carboxykinase (ATP) of Geobacillus kaustophilus (strain HTA426).